The following is an 81-amino-acid chain: Protease inhibitor 3 (81 aa).

The first 24 residues, 1–24 (MSSGCLLLLLGLLTLWAELTPVSG), serve as a signal peptide directing secretion. The BPTI/Kunitz inhibitor domain occupies 29–79 (CELPAESGLCNAYIPSFYYNPHSHKCQKFMYGGCGGNANNFKTIVECHRTC). Cystine bridges form between Cys-29/Cys-79, Cys-38/Cys-62, and Cys-54/Cys-75.

The protein belongs to the venom Kunitz-type family. In terms of tissue distribution, expressed by the venom gland.

It localises to the secreted. Functionally, snake venom serine protease inhibitor. The chain is Protease inhibitor 3 from Walterinnesia aegyptia (Desert black snake).